Consider the following 926-residue polypeptide: Alpha-aminoadipic semialdehyde synthase, mitochondrial (926 aa).

The N-terminal 27 residues, 1 to 27, are a transit peptide targeting the mitochondrion; that stretch reads MLRAQRPRLARLRACLSRGLHHKPVMA. Positions 28 to 455 are lysine-ketoglutarate reductase; that stretch reads LRREDVNAWE…DAVITSNGLL (428 aa). N6-acetyllysine occurs at positions 48, 52, and 56. Lys93 is modified (N6-acetyllysine; alternate). The residue at position 93 (Lys93) is an N6-succinyllysine; alternate. The residue at position 128 (Lys128) is an N6-acetyllysine. The residue at position 138 (Lys138) is an N6-acetyllysine; alternate. Lys138 bears the N6-succinyllysine; alternate mark. Lys274 is subject to N6-succinyllysine. The residue at position 286 (Lys286) is an N6-acetyllysine; alternate. The residue at position 286 (Lys286) is an N6-succinyllysine; alternate. Lys333 is subject to N6-succinyllysine. Lys458 is subject to N6-acetyllysine; alternate. N6-succinyllysine; alternate is present on Lys458. The segment at 477-926 is saccharopine dehydrogenase; that stretch reads MSTKKKVLVL…VFNTQSTIKL (450 aa). Residues Ser488, Asp512, and Gln516 each contribute to the NAD(+) site. An N6-acetyllysine; alternate mark is found at Lys523 and Lys535. 2 positions are modified to N6-succinyllysine; alternate: Lys523 and Lys535. Positions 554, 576, and 577 each coordinate NAD(+). Residue 577–578 participates in L-saccharopine binding; it reads SY. The residue at position 584 (Lys584) is an N6-acetyllysine; alternate. Position 584 is an N6-succinyllysine; alternate (Lys584). 3 residues coordinate NAD(+): Leu603, Asp604, and Pro605. Asp604 lines the L-saccharopine pocket. L-saccharopine is bound at residue Arg703. Lys707 carries the N6-acetyllysine modification. 724–726 contacts L-saccharopine; it reads TLR. Lys732 is modified (N6-succinyllysine). At Lys739 the chain carries N6-acetyllysine. At Lys761 the chain carries N6-acetyllysine; alternate. Residue Lys761 is modified to N6-succinyllysine; alternate. An N6-acetyllysine mark is found at Lys778 and Lys780.

It in the N-terminal section; belongs to the AlaDH/PNT family. In the C-terminal section; belongs to the saccharopine dehydrogenase family. Homotetramer. Highly expressed in kidney and liver, very low expression is seen in heart, brain, spleen, lung, skeletal muscle and testis.

It is found in the mitochondrion. The catalysed reaction is L-saccharopine + NADP(+) + H2O = L-lysine + 2-oxoglutarate + NADPH + H(+). It catalyses the reaction L-saccharopine + NAD(+) + H2O = (S)-2-amino-6-oxohexanoate + L-glutamate + NADH + H(+). Its pathway is amino-acid degradation; L-lysine degradation via saccharopine pathway; glutaryl-CoA from L-lysine: step 1/6. It functions in the pathway amino-acid degradation; L-lysine degradation via saccharopine pathway; glutaryl-CoA from L-lysine: step 2/6. In terms of biological role, bifunctional enzyme that catalyzes the first two steps in lysine degradation. This chain is Alpha-aminoadipic semialdehyde synthase, mitochondrial, found in Mus musculus (Mouse).